We begin with the raw amino-acid sequence, 106 residues long: Follitropin subunit beta (106 aa).

6 disulfide bridges follow: Cys1–Cys49, Cys15–Cys64, Cys18–Cys102, Cys26–Cys80, Cys30–Cys82, and Cys85–Cys92. N-linked (GlcNAc...) asparagine glycosylation is found at Asn5 and Asn22.

The protein belongs to the glycoprotein hormones subunit beta family. As to quaternary structure, heterodimer. The active follitropin is a heterodimer composed of an alpha chain/CGA shared with other hormones and a unique beta chain/FSHB shown here.

Its subcellular location is the secreted. In terms of biological role, together with the alpha chain CGA constitutes follitropin, the follicle-stimulating hormone, and provides its biological specificity to the hormone heterodimer. Binds FSHR, a G protein-coupled receptor, on target cells to activate downstream signaling pathways. Follitropin is involved in follicle development and spermatogenesis in reproductive organs. This Struthio camelus (Common ostrich) protein is Follitropin subunit beta (FSHB).